Consider the following 154-residue polypeptide: Large ribosomal subunit protein uL15 (154 aa).

Residues 1 to 13 (MKLHELKPAEGSR) show a composition bias toward basic and acidic residues. The tract at residues 1–52 (MKLHELKPAEGSRKNRKRVGRGPGGTDKTAGRGHKGQKSRSGAGKGSFFEGG) is disordered.

The protein belongs to the universal ribosomal protein uL15 family. Part of the 50S ribosomal subunit.

Binds to the 23S rRNA. The chain is Large ribosomal subunit protein uL15 from Deinococcus deserti (strain DSM 17065 / CIP 109153 / LMG 22923 / VCD115).